The primary structure comprises 364 residues: Isoflavone 4'-O-methyltransferase (364 aa).

S-adenosyl-L-methionine-binding positions include Val-206–Gly-209, Asp-230, Asp-230–Gln-231, Asp-250–Met-251, and Lys-264. His-268 serves as the catalytic Proton acceptor.

It belongs to the class I-like SAM-binding methyltransferase superfamily. Cation-independent O-methyltransferase family. COMT subfamily. As to quaternary structure, homodimer.

The enzyme catalyses a 4'-hydroxyisoflavone + S-adenosyl-L-methionine = a 4'-methoxyisoflavone + S-adenosyl-L-homocysteine + H(+). It catalyses the reaction (2R,3S)-2,4',7-trihydroxyisoflavanone + S-adenosyl-L-methionine = (2R,3S)-2,7-dihydroxy-4'-methoxyisoflavanone + S-adenosyl-L-homocysteine + H(+). Its function is as follows. 2-hydroxyisoflavanone 4'-O-methyltransferase involved in the biosynthesis of the phytoalexin medicarpin. Has also an in vitro (+)-6a-hydroxymaackiain-3-0-methyltransferase activity, converting the pterocarpan 6a-hydroxymaackiain into pisatin. No activity with di- or trihydroxylated isoflavones, including daidzein and genistein, or with (-)-medicarpin and maackiain. The dual activity for either 3- or 4'-O-methylation depends upon substrate availability. The chain is Isoflavone 4'-O-methyltransferase (HI4'OMT) from Medicago truncatula (Barrel medic).